The sequence spans 308 residues: Zinc finger CCCH domain-containing protein 15 (308 aa).

The disordered stretch occupies residues 1–21; the sequence is MENKIAPFSYSGSSAGNSSSG. Residues 9–21 show a composition bias toward low complexity; it reads SYSGSSAGNSSSG. The stretch at 56 to 91 forms a coiled coil; it reads TRLHEASLEAEALRLENTELRSMNLRLKNELNSLIR. The tract at residues 110 to 190 is disordered; that stretch reads LSIGGNDADE…GTVTKPGTCG (81 aa). Ser111 is subject to Phosphoserine. The segment covering 148-164 has biased composition (polar residues); that stretch reads RSSLPKSISVRSNGYSK. C3H1-type zinc fingers lie at residues 222-250 and 260-288; these read MTKTELCNKWQETGTCPYGDHCQFAHGIK and RYKTEVCRMVLAGDNCPYGHRCHFRHSLS.

Post-translationally, phosphorylated at Ser-111 by ASK7/BIN2 in the cytoplasm in the absence of brassinosteroids (BRs). Highly expressed in secondary cell wall-forming tissues and the xylem cells of roots. Expressed predominantly in inflorescence stems, flowers and siliques. Highly expressed in the basal portion of stems, where cells are undergoing secondary cell wall thickening. Highly expressed in meiocytes and tapetum from anthers.

The protein resides in the cytoplasm. It localises to the nucleus. In terms of biological role, functions probably as a transcriptional factor that activates genes involved in secondary cell wall biosynthesis. Functions redudantly with C3H14 to regulate secondary cell wall formation. C3H14 and C3H15 have overlapping roles in the regulation of secondary cell wall formation and anther development. C3H14 may contribute more to secondary cell wall thickening while C3H15 could be more important in anther development. May regulate at both the transcriptional and post-transcriptional levels the expression of many genes involved in various biological processes, particularly those associated with cell wall metabolism and pollen development. Involved in the regulation of callose metabolism in male meiocytes, in integrity of newly formed microspores, and promotes male fertility. May be involved in the regulation of the callose synthesis genes CALS5 and CALS12, the potential degradation of callose walls-related genes A6 and MYB80, as well as other putative beta-1,3-glucanase genes. Negatively regulates cell elongation by inhibiting brassinosteroid (BR) signaling. Functions downstream of the BRI1 receptor as a negative regulator in the BR pathway. The protein is Zinc finger CCCH domain-containing protein 15 of Arabidopsis thaliana (Mouse-ear cress).